Here is a 619-residue protein sequence, read N- to C-terminus: Alpha-L-arabinofuranosidase C (619 aa).

Positions M1–A37 are cleaved as a signal peptide. In terms of domain architecture, CBM2 spans A38 to A136. C39 and C133 form a disulfide bridge. The CBM6 domain maps to L163–V289. The interval S300–Q319 is disordered.

Belongs to the glycosyl hydrolase 62 family.

It localises to the secreted. The catalysed reaction is Hydrolysis of terminal non-reducing alpha-L-arabinofuranoside residues in alpha-L-arabinosides.. It functions in the pathway glycan metabolism; hemicellulose degradation. Functionally, xylanase C contributes to hydrolyze hemicellulose, the major component of plant cell-walls. This chain is Alpha-L-arabinofuranosidase C (xynC), found in Cellvibrio japonicus (strain Ueda107) (Pseudomonas fluorescens subsp. cellulosa).